The chain runs to 713 residues: Protein tyrosine phosphatase domain-containing protein 1 (713 aa).

The Tyrosine-protein phosphatase domain maps to 80–251; it reads YSSWITDHLL…LVPLRSVFSC (172 aa). Cys-188 acts as the Phosphocysteine intermediate in catalysis.

This sequence belongs to the protein-tyrosine phosphatase family. Non-receptor class PTPDC1 subfamily.

In terms of biological role, may play roles in cilia formation and/or maintenance. The protein is Protein tyrosine phosphatase domain-containing protein 1 (ptpdc1) of Danio rerio (Zebrafish).